Here is a 305-residue protein sequence, read N- to C-terminus: Probable GTP 3',8-cyclase (305 aa).

One can recognise a Radical SAM core domain in the interval 6–233; that stretch reads RHGRPVMSLR…MQDRKKYYID (228 aa). Arg-15 is a binding site for GTP. [4Fe-4S] cluster is bound by residues Cys-22 and Cys-26. Tyr-28 contacts S-adenosyl-L-methionine. A [4Fe-4S] cluster-binding site is contributed by Cys-29. Arg-62 is a GTP binding site. Residue Gly-66 coordinates S-adenosyl-L-methionine. Position 92 (Thr-92) interacts with GTP. An S-adenosyl-L-methionine-binding site is contributed by Ser-116. Lys-153 contacts GTP. [4Fe-4S] cluster-binding residues include Cys-249 and Cys-252. A GTP-binding site is contributed by 254-256; sequence RLR. Cys-266 is a [4Fe-4S] cluster binding site.

It belongs to the radical SAM superfamily. MoaA family. The cofactor is [4Fe-4S] cluster.

It catalyses the reaction GTP + AH2 + S-adenosyl-L-methionine = (8S)-3',8-cyclo-7,8-dihydroguanosine 5'-triphosphate + 5'-deoxyadenosine + L-methionine + A + H(+). It participates in cofactor biosynthesis; molybdopterin biosynthesis. Its function is as follows. Catalyzes the cyclization of GTP to (8S)-3',8-cyclo-7,8-dihydroguanosine 5'-triphosphate. This chain is Probable GTP 3',8-cyclase, found in Methanothermobacter thermautotrophicus (strain ATCC 29096 / DSM 1053 / JCM 10044 / NBRC 100330 / Delta H) (Methanobacterium thermoautotrophicum).